The chain runs to 393 residues: Ethanol acetyltransferase 1 (393 aa).

A mitochondrion-targeting transit peptide spans 1-25; sequence MHFTRTLFNQVASKASRQLPVQKRV. Residues 49–151 form the AB hydrolase-1 domain; it reads PIVFVHGIFG…GVIIDNSPIE (103 aa). Active-site charge relay system residues include Ser-122, Asp-146, and His-296. Basic and acidic residues predominate over residues 343–354; that stretch reads AKHAQQIEELRK. Positions 343-393 are disordered; sequence AKHAQQIEELRKVTSTSESSIPHSTQSSEQAFTENIDLARQEREHQKSVSA. The span at 355–375 shows a compositional bias: polar residues; that stretch reads VTSTSESSIPHSTQSSEQAFT. A compositionally biased stretch (basic and acidic residues) spans 379–393; that stretch reads DLARQEREHQKSVSA.

This sequence belongs to the AB hydrolase superfamily.

The protein localises to the mitochondrion. It catalyses the reaction ethanol + acetyl-CoA = ethyl acetate + CoA. It carries out the reaction acetyl-CoA + H2O = acetate + CoA + H(+). The enzyme catalyses ethyl acetate + H2O = ethanol + acetate + H(+). Alcohol acetyltransferase that catalyzes the synthesis of ethyl acetate from ethanol and acetyl-CoA. Can also function as a thioesterase by hydrolyzing acetyl-CoA in the absence of ethanol, as well as esterase hydrolyzing ethyl acetate. The protein is Ethanol acetyltransferase 1 (EAT1) of Wickerhamomyces ciferrii (strain ATCC 14091 / BCRC 22168 / CBS 111 / JCM 3599 / NBRC 0793 / NRRL Y-1031 F-60-10) (Yeast).